The following is an 856-amino-acid chain: Rod cGMP-specific 3',5'-cyclic phosphodiesterase subunit beta (856 aa).

Ser2 is modified (N-acetylserine). GAF domains lie at 71-220 (NMER…TLNL) and 252-429 (DIER…GWSV). A PDEase domain is found at 481–814 (EEDELGKILK…KEWKALADEY (334 aa)). His557 (proton donor) is an active-site residue. His561, His597, Asp598, and Asp718 together coordinate a divalent metal cation. Cys853 carries the S-geranylgeranyl cysteine lipid modification. Residues 854 to 856 (CIL) constitute a propeptide, removed in mature form.

This sequence belongs to the cyclic nucleotide phosphodiesterase family. Oligomer composed of two catalytic chains (alpha and beta), an inhibitory chain (gamma) and the delta chain. It depends on a divalent metal cation as a cofactor.

The protein resides in the membrane. It localises to the cell projection. It is found in the cilium. Its subcellular location is the photoreceptor outer segment. The enzyme catalyses 3',5'-cyclic GMP + H2O = GMP + H(+). Its function is as follows. Rod-specific cGMP phosphodiesterase that catalyzes the hydrolysis of 3',5'-cyclic GMP. Necessary for the formation of a functional phosphodiesterase holoenzyme. Involved in retinal circadian rhythm photoentrainment via modulation of UVA and orange light-induced phase-shift of the retina clock. May participate in processes of transmission and amplification of the visual signal. The protein is Rod cGMP-specific 3',5'-cyclic phosphodiesterase subunit beta of Mus musculus (Mouse).